A 57-amino-acid chain; its full sequence is Small ribosomal subunit protein bS21 (57 aa).

The segment at 32-57 is disordered; it reads VRKRKHFEKPSVKRKKKSEAARKRKF. Over residues 33 to 57 the composition is skewed to basic residues; the sequence is RKRKHFEKPSVKRKKKSEAARKRKF.

The protein belongs to the bacterial ribosomal protein bS21 family.

This chain is Small ribosomal subunit protein bS21, found in Shouchella clausii (strain KSM-K16) (Alkalihalobacillus clausii).